The sequence spans 415 residues: Phosphoribosylamine--glycine ligase (415 aa).

An ATP-grasp domain is found at 108 to 311 (KKIMEKYNIP…LMQHIIDLDE (204 aa)). An ATP-binding site is contributed by 134-191 (IENCELPVVVKKDGLAAGKGVIIADTIEAARSAIEIMYGDEEEGTVVFETFLEGEEFS). 2 residues coordinate Mg(2+): Glu281 and Asn283.

Belongs to the GARS family. It depends on Mg(2+) as a cofactor. Requires Mn(2+) as cofactor.

It catalyses the reaction 5-phospho-beta-D-ribosylamine + glycine + ATP = N(1)-(5-phospho-beta-D-ribosyl)glycinamide + ADP + phosphate + H(+). The protein operates within purine metabolism; IMP biosynthesis via de novo pathway; N(1)-(5-phospho-D-ribosyl)glycinamide from 5-phospho-alpha-D-ribose 1-diphosphate: step 2/2. This is Phosphoribosylamine--glycine ligase from Staphylococcus aureus (strain MW2).